Here is a 193-residue protein sequence, read N- to C-terminus: UPF0301 protein Bfl251 (193 aa).

The protein belongs to the UPF0301 (AlgH) family.

The sequence is that of UPF0301 protein Bfl251 from Blochmanniella floridana.